Here is a 101-residue protein sequence, read N- to C-terminus: Large ribosomal subunit protein eL43 (101 aa).

The segment at 40 to 62 adopts a C4-type zinc-finger fold; sequence CPSCRSLVRLKRLAFGIWQCPKC.

It belongs to the eukaryotic ribosomal protein eL43 family. Zn(2+) serves as cofactor.

The chain is Large ribosomal subunit protein eL43 from Pyrobaculum islandicum (strain DSM 4184 / JCM 9189 / GEO3).